A 247-amino-acid chain; its full sequence is Disease resistance protein BAK6 (247 aa).

The N-terminal stretch at 1–24 (MAAVQFAAAGVLTGLLALATLASC) is a signal peptide. N-linked (GlcNAc...) asparagine glycans are attached at residues asparagine 66, asparagine 104, and asparagine 113. LRR repeat units follow at residues 90 to 114 (LESLQYMELFGNSLNGSIPSTLGNL), 116 to 138 (DLISLDLWDNLLTGPIPTTLGSI), 139 to 161 (STLRYLRLYENNLTGPIPPSFGN), 162 to 186 (LTSLLELKLHRNSLSGSIPASLGNI), 188 to 210 (SLQFLKLNENMLTGTVPLEVLSL), and 213 to 237 (VGNLTELNIARNNLDGTVRSSGLRV). Residues asparagine 150 and asparagine 161 are each glycosylated (N-linked (GlcNAc...) asparagine). A glycan (N-linked (GlcNAc...) asparagine) is linked at asparagine 215.

In terms of assembly, interacts with WAK17 isoform 1; the interaction is direct. As to quaternary structure, (Microbial infection) Interacts with G.zeae CFEM1; the interaction is direct. Interacts with G.zeae CFEMN1; the interaction is direct. Interacts with G.zeae CFEM5; the interaction is direct.

Contributes to activation of the hypersensitive response, a form of programmed cell death, upon fungal infection. May sense the presence of fungal material and relay the signal to WAK17 isoform 1. This chain is Disease resistance protein BAK6, found in Zea mays (Maize).